A 267-amino-acid chain; its full sequence is NAD kinase 2 (267 aa).

Asp-50 functions as the Proton acceptor in the catalytic mechanism. NAD(+) contacts are provided by residues 50-51 (DG), Lys-55, 122-123 (NE), Arg-149, Asp-151, 162-167 (TAYNKS), and Ala-186.

It belongs to the NAD kinase family. A divalent metal cation serves as cofactor.

Its subcellular location is the cytoplasm. It catalyses the reaction NAD(+) + ATP = ADP + NADP(+) + H(+). Its function is as follows. Involved in the regulation of the intracellular balance of NAD and NADP, and is a key enzyme in the biosynthesis of NADP. Catalyzes specifically the phosphorylation on 2'-hydroxyl of the adenosine moiety of NAD to yield NADP. The sequence is that of NAD kinase 2 from Listeria monocytogenes serovar 1/2a (strain ATCC BAA-679 / EGD-e).